Reading from the N-terminus, the 63-residue chain is Large ribosomal subunit protein bL35 (63 aa).

Positions 26–50 (GSGMRHNLEHKSARKRRALKRDDVL) are disordered.

It belongs to the bacterial ribosomal protein bL35 family.

The chain is Large ribosomal subunit protein bL35 from Bifidobacterium animalis subsp. lactis (strain AD011).